We begin with the raw amino-acid sequence, 247 residues long: Enolase-phosphatase E1 (247 aa).

It belongs to the HAD-like hydrolase superfamily. MasA/MtnC family. Monomer. Mg(2+) serves as cofactor.

It carries out the reaction 5-methylsulfanyl-2,3-dioxopentyl phosphate + H2O = 1,2-dihydroxy-5-(methylsulfanyl)pent-1-en-3-one + phosphate. The protein operates within amino-acid biosynthesis; L-methionine biosynthesis via salvage pathway; L-methionine from S-methyl-5-thio-alpha-D-ribose 1-phosphate: step 3/6. It functions in the pathway amino-acid biosynthesis; L-methionine biosynthesis via salvage pathway; L-methionine from S-methyl-5-thio-alpha-D-ribose 1-phosphate: step 4/6. Its function is as follows. Bifunctional enzyme that catalyzes the enolization of 2,3-diketo-5-methylthiopentyl-1-phosphate (DK-MTP-1-P) into the intermediate 2-hydroxy-3-keto-5-methylthiopentenyl-1-phosphate (HK-MTPenyl-1-P), which is then dephosphorylated to form the acireductone 1,2-dihydroxy-3-keto-5-methylthiopentene (DHK-MTPene). This Leptospira biflexa serovar Patoc (strain Patoc 1 / Ames) protein is Enolase-phosphatase E1.